The chain runs to 145 residues: Probable low molecular weight protein-tyrosine-phosphatase EpsP (145 aa).

Catalysis depends on Cys-9, which acts as the Nucleophile. Arg-15 is a catalytic residue. Asp-114 serves as the catalytic Proton donor.

This sequence belongs to the low molecular weight phosphotyrosine protein phosphatase family.

The catalysed reaction is O-phospho-L-tyrosyl-[protein] + H2O = L-tyrosyl-[protein] + phosphate. It functions in the pathway glycan metabolism; exopolysaccharide biosynthesis. May be involved in assembly or function of the EPS I polymerization/export complex and/or the EpsB ATPase. Alternatively it may function in the removal of the terminal phosphate from C55-isoprenyl pyrophosphate in order to recycle the C55-isoprenyl phosphate lipid carrier used in the synthesis of polysaccharide repeat units. The chain is Probable low molecular weight protein-tyrosine-phosphatase EpsP (epsP) from Ralstonia nicotianae (strain ATCC BAA-1114 / GMI1000) (Ralstonia solanacearum).